A 475-amino-acid polypeptide reads, in one-letter code: Tubulin gamma-1 chain (475 aa).

142–148 (AGGTGSG) contacts GTP. A disordered region spans residues 453–475 (VKRGNGPVDSKSEDSRSVTSAGS).

Belongs to the tubulin family. Interacts with Ote.

The protein resides in the cytoplasm. Its subcellular location is the cytoskeleton. The protein localises to the microtubule organizing center. It localises to the centrosome. It is found in the perinuclear region. Tubulin is the major constituent of microtubules. The gamma chain is found at microtubule organizing centers (MTOC) such as the spindle poles or the centrosome, suggesting that it is involved in the minus-end nucleation of microtubule assembly. In Drosophila melanogaster (Fruit fly), this protein is Tubulin gamma-1 chain (gammaTub23C).